Consider the following 205-residue polypeptide: Guanylate kinase (205 aa).

In terms of domain architecture, Guanylate kinase-like spans 3–183 (GFVLLISGPS…SYEALRAILI (181 aa)). ATP is bound at residue 10–17 (GPSGAGKS).

Belongs to the guanylate kinase family.

It localises to the cytoplasm. The enzyme catalyses GMP + ATP = GDP + ADP. Functionally, essential for recycling GMP and indirectly, cGMP. This Campylobacter jejuni (strain RM1221) protein is Guanylate kinase.